A 307-amino-acid chain; its full sequence is Putative S-adenosyl-L-methionine-dependent methyltransferase MMAR_4570 (307 aa).

Residues D128 and 157-158 contribute to the S-adenosyl-L-methionine site; that span reads DL.

Belongs to the UPF0677 family.

Exhibits S-adenosyl-L-methionine-dependent methyltransferase activity. The sequence is that of Putative S-adenosyl-L-methionine-dependent methyltransferase MMAR_4570 from Mycobacterium marinum (strain ATCC BAA-535 / M).